Here is a 629-residue protein sequence, read N- to C-terminus: tRNA uridine 5-carboxymethylaminomethyl modification enzyme MnmG (629 aa).

13–18 serves as a coordination point for FAD; sequence GGGHAG. 273-287 is a binding site for NAD(+); the sequence is GPRYCPSIEDKVVRF.

It belongs to the MnmG family. In terms of assembly, homodimer. Heterotetramer of two MnmE and two MnmG subunits. FAD serves as cofactor.

The protein resides in the cytoplasm. Its function is as follows. NAD-binding protein involved in the addition of a carboxymethylaminomethyl (cmnm) group at the wobble position (U34) of certain tRNAs, forming tRNA-cmnm(5)s(2)U34. In Alkalilimnicola ehrlichii (strain ATCC BAA-1101 / DSM 17681 / MLHE-1), this protein is tRNA uridine 5-carboxymethylaminomethyl modification enzyme MnmG.